Consider the following 201-residue polypeptide: Large ribosomal subunit protein bL25 (201 aa).

The protein belongs to the bacterial ribosomal protein bL25 family. CTC subfamily. Part of the 50S ribosomal subunit; part of the 5S rRNA/L5/L18/L25 subcomplex. Contacts the 5S rRNA. Binds to the 5S rRNA independently of L5 and L18.

In terms of biological role, this is one of the proteins that binds to the 5S RNA in the ribosome where it forms part of the central protuberance. In Akkermansia muciniphila (strain ATCC BAA-835 / DSM 22959 / JCM 33894 / BCRC 81048 / CCUG 64013 / CIP 107961 / Muc), this protein is Large ribosomal subunit protein bL25.